We begin with the raw amino-acid sequence, 733 residues long: Two pore calcium channel protein 1 (733 aa).

N-acetylmethionine is present on Met-1. Residues 1–71 (MEDPLIGRDS…RYYFIFTRLD (71 aa)) are Cytoplasmic-facing. A helical transmembrane segment spans residues 72–92 (LIWSLNYFALLFLNFFEQPLW). At 93-120 (CEKNPKPSCKDRDYYYLGELPYLTNAES) the chain is on the vacuolar side. The helical transmembrane segment at 121 to 141 (IIYEVITLAILLVHTFFPISY) threads the bilayer. Topologically, residues 142–158 (EGSRIFWTSRLNLVKVA) are cytoplasmic. A helical transmembrane segment spans residues 159 to 179 (CVVILFVDVLVDFLYLSPLAF). Position 180 (Asp-180) is a topological domain, vacuolar. Residues 181–199 (FLPFRIAPYVRVIIFILSI) form a helical; Voltage-sensor membrane-spanning segment. The Cytoplasmic segment spans residues 200 to 218 (RELRDTLVLLSGMLGTYLN). A helical transmembrane segment spans residues 219–239 (ILALWMLFLLFASWIAFVMFE). Residues 240–245 (DTQQGL) are Vacuolar-facing. An intramembrane region (pore-forming) is located at residues 246–260 (TVFTSYGATLYQMFI). Over 261–282 (LFTTSNNPDVWIPAYKSSRWSS) the chain is Vacuolar. The chain crosses the membrane as a helical span at residues 283 to 303 (VFFVLYVLIGVYFVTNLILAV). Residues 304 to 428 (VYDSFKEQLA…LSQQLRAFVR (125 aa)) are Cytoplasmic-facing. EF-hand domains are found at residues 322–357 (MKRRMLEKAFGLIDSDKNGEIDKNQCIKLFEQLTNY) and 363–398 (ISKEEFGLIFDELDDTRDFKINKDEFADLCQAIALR). The chain crosses the membrane as a helical span at residues 429-449 (SPNFGYAISFILIINFIAVVV). Topologically, residues 450 to 465 (ETTLDIEESSAQKPWQ) are vacuolar. The chain crosses the membrane as a helical span at residues 466 to 486 (VAEFVFGWIYVLEMALKIYTY). Topologically, residues 487-498 (GFENYWREGANR) are cytoplasmic. A helical transmembrane segment spans residues 499–519 (FDFLVTWVIVIGETATFITPD). Residues 520–528 (ENTFFSNGE) lie on the Vacuolar side of the membrane. The helical; Voltage-sensor transmembrane segment at 529-546 (WIRYLLLARMLRLIRLLM) threads the bilayer. Topologically, residues 547–557 (NVQRYRAFIAT) are cytoplasmic. A helical transmembrane segment spans residues 558 to 578 (FITLIPSLMPYLGTIFCVLCI). At 579 to 615 (YCSIGVQVFGGLVNAGNKKLFETELAEDDYLLFNFND) the chain is on the vacuolar side. The pore-forming intramembrane region spans 616 to 630 (YPNGMVTLFNLLVMG). Residues 631–651 (NWQVWMESYKDLTGTWWSITY) lie on the Vacuolar side of the membrane. Residues 652–672 (FVSFYVITILLLLNLVVAFVL) form a helical membrane-spanning segment. Over 673–733 (EAFFTELDLE…SKPECSTSDT (61 aa)) the chain is Cytoplasmic. The span at 686-695 (KCQGQDSQEK) shows a compositional bias: basic and acidic residues. The segment at 686–711 (KCQGQDSQEKRNRRRSAGSKSRSQRV) is disordered.

It belongs to the calcium channel alpha-1 subunit (TC 1.A.1.11) family. Two pore calcium channel subfamily. In terms of assembly, homodimer. Ubiquitously expressed.

Its subcellular location is the vacuole membrane. With respect to regulation, inhibited by Al(3+). Functionally, functions as a voltage-gated inward-rectifying Ca(2+) channel (VDCC) across the vacuole membrane. Is one of the essential components of the slow vacuolar (SV) channel. Acts as the major ROS-responsive Ca(2+) channel and is the possible target of Al-dependent inhibition. Involved in the regulation of germination and stomatal movement. This Arabidopsis thaliana (Mouse-ear cress) protein is Two pore calcium channel protein 1 (TPC1).